Reading from the N-terminus, the 187-residue chain is Ion-translocating oxidoreductase complex subunit B (187 aa).

Residues 1–26 (MTHILFAVLVLALLALAFGIILGFAA) are hydrophobic. Residues 32–90 (EADPIVDQLDALLPQTQCGQCGYPGCKPYAEALANGDQINKCVPGGDATMRKIADLMGV) enclose the 4Fe-4S domain. The [4Fe-4S] cluster site is built by cysteine 49, cysteine 52, cysteine 57, cysteine 73, cysteine 115, cysteine 118, cysteine 121, cysteine 125, cysteine 145, cysteine 148, cysteine 151, and cysteine 155. 4Fe-4S ferredoxin-type domains follow at residues 106–135 (KVAF…GATK) and 136–165 (AMHT…MIPV).

Belongs to the 4Fe4S bacterial-type ferredoxin family. RnfB subfamily. As to quaternary structure, the complex is composed of six subunits: RnfA, RnfB, RnfC, RnfD, RnfE and RnfG. It depends on [4Fe-4S] cluster as a cofactor.

It is found in the cell inner membrane. In terms of biological role, part of a membrane-bound complex that couples electron transfer with translocation of ions across the membrane. This Aeromonas hydrophila subsp. hydrophila (strain ATCC 7966 / DSM 30187 / BCRC 13018 / CCUG 14551 / JCM 1027 / KCTC 2358 / NCIMB 9240 / NCTC 8049) protein is Ion-translocating oxidoreductase complex subunit B.